Consider the following 432-residue polypeptide: Queuine tRNA-ribosyltransferase accessory subunit 2 (432 aa).

4 residues coordinate Zn(2+): C329, C331, C334, and H360. The disordered stretch occupies residues 390-432 (GQKSLPPYEPPKEEKLPMPAAQKAELMEPMEDLGEKQNKKQRA). Residues 422–432 (LGEKQNKKQRA) show a composition bias toward basic and acidic residues.

Belongs to the queuine tRNA-ribosyltransferase family. QTRT2 subfamily. As to quaternary structure, heterodimer of a catalytic subunit and an accessory subunit. It depends on Zn(2+) as a cofactor.

The protein localises to the cytoplasm. In terms of biological role, non-catalytic subunit of the queuine tRNA-ribosyltransferase (TGT) that catalyzes the base-exchange of a guanine (G) residue with queuine (Q) at position 34 (anticodon wobble position) in tRNAs with GU(N) anticodons (tRNA-Asp, -Asn, -His and -Tyr), resulting in the hypermodified nucleoside queuosine (7-(((4,5-cis-dihydroxy-2-cyclopenten-1-yl)amino)methyl)-7-deazaguanosine). The chain is Queuine tRNA-ribosyltransferase accessory subunit 2 from Anopheles gambiae (African malaria mosquito).